Reading from the N-terminus, the 94-residue chain is Large ribosomal subunit protein uL23 (94 aa).

It belongs to the universal ribosomal protein uL23 family. As to quaternary structure, part of the 50S ribosomal subunit. Contacts protein L29, and trigger factor when it is bound to the ribosome.

In terms of biological role, one of the early assembly proteins it binds 23S rRNA. One of the proteins that surrounds the polypeptide exit tunnel on the outside of the ribosome. Forms the main docking site for trigger factor binding to the ribosome. The sequence is that of Large ribosomal subunit protein uL23 from Trichlorobacter lovleyi (strain ATCC BAA-1151 / DSM 17278 / SZ) (Geobacter lovleyi).